A 74-amino-acid polypeptide reads, in one-letter code: UPF0057 membrane protein At4g30660 (74 aa).

Transmembrane regions (helical) follow at residues 4 to 24 (NCEI…GVCF) and 37 to 57 (LVLT…VIVF).

The protein belongs to the UPF0057 (PMP3) family.

The protein localises to the membrane. The chain is UPF0057 membrane protein At4g30660 from Arabidopsis thaliana (Mouse-ear cress).